The following is a 139-amino-acid chain: Cytochrome c2 (139 aa).

The signal sequence occupies residues methionine 1–alanine 25. A Pyrrolidone carboxylic acid modification is found at glutamine 26. Positions 38, 41, 42, and 118 each coordinate heme c.

It belongs to the cytochrome c family. Binds 1 heme c group covalently per subunit.

Its function is as follows. Cytochrome c2 is found mainly in purple, non-sulfur, photosynthetic bacteria where it functions as the electron donor to the oxidized bacteriochlorophyll in the photophosphorylation pathway. However, it may also have a role in the respiratory chain and is found in some non-photosynthetic bacteria. The chain is Cytochrome c2 (cycA) from Rhodopseudomonas palustris (strain ATCC BAA-98 / CGA009).